The primary structure comprises 144 residues: 3-dehydroquinate dehydratase (144 aa).

The active-site Proton acceptor is tyrosine 24. Residues asparagine 76, histidine 82, and aspartate 89 each contribute to the substrate site. The active-site Proton donor is the histidine 102. Residues 103–104 (LS) and arginine 113 contribute to the substrate site.

It belongs to the type-II 3-dehydroquinase family. As to quaternary structure, homododecamer.

It carries out the reaction 3-dehydroquinate = 3-dehydroshikimate + H2O. The protein operates within metabolic intermediate biosynthesis; chorismate biosynthesis; chorismate from D-erythrose 4-phosphate and phosphoenolpyruvate: step 3/7. Catalyzes a trans-dehydration via an enolate intermediate. This Bordetella petrii (strain ATCC BAA-461 / DSM 12804 / CCUG 43448) protein is 3-dehydroquinate dehydratase.